Consider the following 1010-residue polypeptide: Retinoblastoma-related protein 1 (1010 aa).

A disordered region spans residues 1 to 23 (MEGAAPPASSGSEVTGAGSGKVD). The tract at residues 419–619 (TPVSTAMTTA…EKGSSMYNSL (201 aa)) is domain A. The interval 419–861 (TPVSTAMTTA…NEVFIPTVKP (443 aa)) is pocket. Residues 620-730 (IVARPTLSAE…PAAGGELCAE (111 aa)) are spacer. The disordered stretch occupies residues 657–679 (LPPLPFQKQEHSPDKDEVRSPKR). Positions 664–679 (KQEHSPDKDEVRSPKR) are enriched in basic and acidic residues. The tract at residues 731–861 (TGIGVFLSKI…NEVFIPTVKP (131 aa)) is domain B. A disordered region spans residues 868–898 (SGTSPNKKNEEKCAADGPYPESPRLSRFPNL).

Belongs to the retinoblastoma protein (RB) family.

The protein resides in the nucleus. Regulator of biological processes that recruits a histone deacetylase to control gene transcription. May play a role in the entry into mitosis, negatively regulating the cell proliferation. Formation of stable complexes with geminiviridae replication-associated proteins may create a cellular environment which favors viral DNA replication. The polypeptide is Retinoblastoma-related protein 1 (RBR1) (Oryza sativa subsp. indica (Rice)).